Consider the following 148-residue polypeptide: Large ribosomal subunit protein uL13 (148 aa).

This sequence belongs to the universal ribosomal protein uL13 family. In terms of assembly, part of the 50S ribosomal subunit.

Functionally, this protein is one of the early assembly proteins of the 50S ribosomal subunit, although it is not seen to bind rRNA by itself. It is important during the early stages of 50S assembly. This chain is Large ribosomal subunit protein uL13, found in Lacticaseibacillus casei (strain BL23) (Lactobacillus casei).